A 333-amino-acid polypeptide reads, in one-letter code: Galactinol synthase 1 (333 aa).

Lysine 104 is a catalytic residue. Mn(2+) contacts are provided by aspartate 120, aspartate 122, and histidine 257.

It belongs to the glycosyltransferase 8 family. Galactosyltransferase subfamily. Requires a divalent metal cation as cofactor. As to expression, expressed in source leaves, specifically in the mesophyll.

The protein resides in the cytoplasm. The enzyme catalyses myo-inositol + UDP-alpha-D-galactose = alpha-D-galactosyl-(1-&gt;3)-1D-myo-inositol + UDP + H(+). Functionally, major galactinol synthase mainly involved in the biosynthesis of storage raffinose family oligosaccharides (RFOs) that function as osmoprotectants. May promote plant stress tolerance. The polypeptide is Galactinol synthase 1 (GOLS1) (Ajuga reptans (Bugle)).